A 371-amino-acid polypeptide reads, in one-letter code: Alanine dehydrogenase (371 aa).

Substrate contacts are provided by R15 and K74. The Proton donor/acceptor role is filled by H95. NAD(+) contacts are provided by residues S133, 177-178 (QA), D197, S219, 238-239 (VL), 266-269 (IAID), and 298-301 (VANM). The active-site Proton donor/acceptor is the D269.

It belongs to the AlaDH/PNT family. As to quaternary structure, homohexamer. Trimer of dimer.

It carries out the reaction L-alanine + NAD(+) + H2O = pyruvate + NH4(+) + NADH + H(+). Its pathway is amino-acid degradation; L-alanine degradation via dehydrogenase pathway; NH(3) and pyruvate from L-alanine: step 1/1. Its function is as follows. Catalyzes the reversible reductive amination of pyruvate to L-alanine. May play a role in cell wall synthesis as L-alanine is an important constituent of the peptidoglycan layer. The sequence is that of Alanine dehydrogenase (ald) from Staphylococcus epidermidis (strain ATCC 35984 / DSM 28319 / BCRC 17069 / CCUG 31568 / BM 3577 / RP62A).